A 290-amino-acid polypeptide reads, in one-letter code: 33 kDa chaperonin (290 aa).

Disulfide bonds link Cys-231-Cys-233 and Cys-264-Cys-267.

Belongs to the HSP33 family. In terms of processing, under oxidizing conditions two disulfide bonds are formed involving the reactive cysteines. Under reducing conditions zinc is bound to the reactive cysteines and the protein is inactive.

It localises to the cytoplasm. Its function is as follows. Redox regulated molecular chaperone. Protects both thermally unfolding and oxidatively damaged proteins from irreversible aggregation. Plays an important role in the bacterial defense system toward oxidative stress. This is 33 kDa chaperonin from Photorhabdus laumondii subsp. laumondii (strain DSM 15139 / CIP 105565 / TT01) (Photorhabdus luminescens subsp. laumondii).